We begin with the raw amino-acid sequence, 1158 residues long: ATP-dependent helicase/deoxyribonuclease subunit B (1158 aa).

One can recognise a UvrD-like helicase ATP-binding domain in the interval 1 to 275 (MTLHAYLGRA…QYFNQLYRFN (275 aa)). 8-15 (GRAGTGKS) contributes to the ATP binding site. The region spanning 269–583 (NQLYRFNNQD…SIGTMDLAKV (315 aa)) is the UvrD-like helicase C-terminal domain. 4 residues coordinate [4Fe-4S] cluster: Cys-784, Cys-1112, Cys-1115, and Cys-1121.

It belongs to the helicase family. AddB/RexB type 1 subfamily. In terms of assembly, heterodimer of AddA and AddB. Requires Mg(2+) as cofactor. It depends on [4Fe-4S] cluster as a cofactor.

Functionally, the heterodimer acts as both an ATP-dependent DNA helicase and an ATP-dependent, dual-direction single-stranded exonuclease. Recognizes the chi site generating a DNA molecule suitable for the initiation of homologous recombination. The AddB subunit has 5' -&gt; 3' nuclease activity but not helicase activity. This chain is ATP-dependent helicase/deoxyribonuclease subunit B, found in Staphylococcus aureus (strain MW2).